Consider the following 285-residue polypeptide: Probable endonuclease 4 (285 aa).

Residues His67, His107, Glu144, Asp178, His181, His215, Asp228, His230, and Glu260 each coordinate Zn(2+).

This sequence belongs to the AP endonuclease 2 family. Requires Zn(2+) as cofactor.

The catalysed reaction is Endonucleolytic cleavage to 5'-phosphooligonucleotide end-products.. In terms of biological role, endonuclease IV plays a role in DNA repair. It cleaves phosphodiester bonds at apurinic or apyrimidinic (AP) sites, generating a 3'-hydroxyl group and a 5'-terminal sugar phosphate. This chain is Probable endonuclease 4, found in Chloroflexus aurantiacus (strain ATCC 29366 / DSM 635 / J-10-fl).